The following is a 115-amino-acid chain: T cell receptor beta variable 11-2 (115 aa).

The first 21 residues, 1 to 21, serve as a signal peptide directing secretion; sequence MGTRLLCWAALCLLGAELTEA. An Ig-like domain is found at 22 to 115; it reads GVAQSPRYKI…SAVYLCASSL (94 aa). An intrachain disulfide couples Cys-42 to Cys-111.

In terms of assembly, alpha-beta TR is a heterodimer composed of an alpha and beta chain; disulfide-linked. The alpha-beta TR is associated with the transmembrane signaling CD3 coreceptor proteins to form the TR-CD3 (TcR or TCR). The assembly of alpha-beta TR heterodimers with CD3 occurs in the endoplasmic reticulum where a single alpha-beta TR heterodimer associates with one CD3D-CD3E heterodimer, one CD3G-CD3E heterodimer and one CD247 homodimer forming a stable octameric structure. CD3D-CD3E and CD3G-CD3E heterodimers preferentially associate with TR alpha and TR beta chains, respectively. The association of the CD247 homodimer is the last step of TcR assembly in the endoplasmic reticulum and is required for transport to the cell surface.

It localises to the cell membrane. In terms of biological role, v region of the variable domain of T cell receptor (TR) beta chain that participates in the antigen recognition. Alpha-beta T cell receptors are antigen specific receptors which are essential to the immune response and are present on the cell surface of T lymphocytes. Recognize peptide-major histocompatibility (MH) (pMH) complexes that are displayed by antigen presenting cells (APC), a prerequisite for efficient T cell adaptive immunity against pathogens. Binding of alpha-beta TR to pMH complex initiates TR-CD3 clustering on the cell surface and intracellular activation of LCK that phosphorylates the ITAM motifs of CD3G, CD3D, CD3E and CD247 enabling the recruitment of ZAP70. In turn ZAP70 phosphorylates LAT, which recruits numerous signaling molecules to form the LAT signalosome. The LAT signalosome propagates signal branching to three major signaling pathways, the calcium, the mitogen-activated protein kinase (MAPK) kinase and the nuclear factor NF-kappa-B (NF-kB) pathways, leading to the mobilization of transcription factors that are critical for gene expression and essential for T cell growth and differentiation. The T cell repertoire is generated in the thymus, by V-(D)-J rearrangement. This repertoire is then shaped by intrathymic selection events to generate a peripheral T cell pool of self-MH restricted, non-autoaggressive T cells. Post-thymic interaction of alpha-beta TR with the pMH complexes shapes TR structural and functional avidity. The protein is T cell receptor beta variable 11-2 of Homo sapiens (Human).